The following is a 284-amino-acid chain: MSNEISRNWPAPAKLNLFLHINGRRADGYHELQTLFQFIDCCDLLDFRVTQTPEQILHSDMSAVVADSDNLILRAAKSLQQATGYPGGAEIWLEKRLPMGGGLGGGSSDAATTLVALNQLWDTQLSNDELATIGLKLGADIPVFIRGFAAFAEGVGERLQAVTPTEFWYLVIAPDAHVSTAAVFQDPLLPRNTPKLGIDTLMSQPWANDCQDLVVSKYPQVAKALAWLLEYAPSRMTGTGACVFGEFSSQQQALAALAKLPSDMQGFVAKGMNISPLIVRLNRP.

Lys14 is a catalytic residue. 98–108 (PMGGGLGGGSS) serves as a coordination point for ATP. Residue Asp140 is part of the active site.

The protein belongs to the GHMP kinase family. IspE subfamily.

It catalyses the reaction 4-CDP-2-C-methyl-D-erythritol + ATP = 4-CDP-2-C-methyl-D-erythritol 2-phosphate + ADP + H(+). It participates in isoprenoid biosynthesis; isopentenyl diphosphate biosynthesis via DXP pathway; isopentenyl diphosphate from 1-deoxy-D-xylulose 5-phosphate: step 3/6. In terms of biological role, catalyzes the phosphorylation of the position 2 hydroxy group of 4-diphosphocytidyl-2C-methyl-D-erythritol. This Shewanella sp. (strain MR-4) protein is 4-diphosphocytidyl-2-C-methyl-D-erythritol kinase.